Here is an 89-residue protein sequence, read N- to C-terminus: Small ribosomal subunit protein uS17 (89 aa).

The protein belongs to the universal ribosomal protein uS17 family. Part of the 30S ribosomal subunit.

Functionally, one of the primary rRNA binding proteins, it binds specifically to the 5'-end of 16S ribosomal RNA. The polypeptide is Small ribosomal subunit protein uS17 (Xanthomonas axonopodis pv. citri (strain 306)).